Reading from the N-terminus, the 383-residue chain is 3-phytase (383 aa).

An N-terminal signal peptide occupies residues 1 to 26 (MNHSKTLLLTAAAGLMLTCGAVSSQA). Positions 27–29 (KHK) are excised as a propeptide. Residues 30–362 (LSDPYHFTVN…VPWERIADQI (333 aa)) enclose the BPP domain.

Ca(2+) serves as cofactor.

The protein localises to the secreted. The enzyme catalyses 1D-myo-inositol hexakisphosphate + H2O = 1D-myo-inositol 1,2,4,5,6-pentakisphosphate + phosphate. Catalyzes the hydrolysis of inorganic orthophosphate from phytate. Only phytate, ADP, and ATP were hydrolyzed (100, 75, and 50% of the relative activity, respectively). This is 3-phytase (phyC) from Bacillus subtilis.